A 514-amino-acid chain; its full sequence is Putative thymidine phosphorylase (514 aa).

This sequence belongs to the thymidine/pyrimidine-nucleoside phosphorylase family. Type 2 subfamily.

It carries out the reaction thymidine + phosphate = 2-deoxy-alpha-D-ribose 1-phosphate + thymine. The sequence is that of Putative thymidine phosphorylase from Rhodopseudomonas palustris (strain ATCC BAA-98 / CGA009).